Reading from the N-terminus, the 216-residue chain is MVGRLSLQDVPELVDTKKKGDGVLDSPDSGLPPSPSPSHWGLAATAGGGGERAPVAGTLEPDAAVTPIVPNPASLTHSLAAICSPRLCPLSFGEGVEFDPLPPKEIKYTSSVKYDSERHFIDDVQMPLGLVVASCSQTVTCIPNCTWRNYKAEVRFEPRPKPARFLSTTIVYPKYPKTVYTTTLDYNCHKKLRRFLSSVELEATEFLGSDGLADEC.

A disordered region spans residues 1–55; it reads MVGRLSLQDVPELVDTKKKGDGVLDSPDSGLPPSPSPSHWGLAATAGGGGERAPV. Phosphoserine is present on residues serine 6 and serine 26.

This sequence belongs to the Refilin family. In terms of assembly, interacts with FLNA and FLNB. As to expression, detected in various tissues, with highest expression in lung, followed by spleen.

It is found in the cytoplasm. The protein resides in the cytoskeleton. Its function is as follows. Involved in the regulation of the perinuclear actin network and nuclear shape through interaction with filamins. Plays an essential role in the formation of cartilaginous skeletal elements. The protein is Refilin-B of Mus musculus (Mouse).